A 95-amino-acid chain; its full sequence is Beta-defensin 132 (95 aa).

A signal peptide spans 1-22 (MKFLLLVLAALRFLTQVIPASA). 3 disulfides stabilise this stretch: C27-C55, C35-C49, and C39-C56. A disordered region spans residues 72–95 (GNHWQSRRRNTQRKDKKQQTTVTS). The segment covering 76–87 (QSRRRNTQRKDK) has biased composition (basic residues).

It belongs to the beta-defensin family.

The protein localises to the secreted. Functionally, has antibacterial activity. This is Beta-defensin 132 (DEFB132) from Pongo pygmaeus (Bornean orangutan).